The primary structure comprises 188 residues: Pallidipin (188 aa).

A signal peptide spans 1–18 (MKVIIAATLLGILMHAFA). 3 disulfide bridges follow: Cys-21-Cys-137, Cys-55-Cys-184, and Cys-89-Cys-105.

The protein belongs to the calycin superfamily. Triabin family. Expressed in salivary glands.

The protein resides in the secreted. Its function is as follows. Has been described as a specific inhibitor of collagen-induced platelet aggregation. However, as it does not affect platelet shape change or adhesion, it is plausible that it exerts its antiplatelet activity by a mechanism similar to that of triplatin, moubatin and dipetalodipin as scavenging eicosanoids involved in inflammation such as thromboxane A2 (TXA2). This Meccus pallidipennis (Triatomine bug) protein is Pallidipin.